We begin with the raw amino-acid sequence, 112 residues long: Putative pterin-4-alpha-carbinolamine dehydratase (112 aa).

Belongs to the pterin-4-alpha-carbinolamine dehydratase family.

It carries out the reaction (4aS,6R)-4a-hydroxy-L-erythro-5,6,7,8-tetrahydrobiopterin = (6R)-L-erythro-6,7-dihydrobiopterin + H2O. The sequence is that of Putative pterin-4-alpha-carbinolamine dehydratase from Shewanella halifaxensis (strain HAW-EB4).